The sequence spans 194 residues: uncharacterized protein (194 aa).

Residues 20–185 (RIFIDTETTG…ADCRMTLGII (166 aa)) enclose the Exonuclease domain.

This is an uncharacterized protein from Escherichia coli (Bacteriophage 186).